Reading from the N-terminus, the 551-residue chain is uncharacterized protein (551 aa).

Disordered stretches follow at residues 66 to 111 (GNNK…STNL), 130 to 165 (PEATGLMKEDITPVVNTSKQSSTGTQEESSKPEKSN), 180 to 229 (AFNP…LSNL), and 277 to 303 (AFTSPRLPSPPQSTRPSSTRFPSVPLS). Ser-74 carries the post-translational modification Phosphoserine. Composition is skewed to polar residues over residues 92-111 (GFSNRESMSENCFSKSSTNL) and 143-156 (VVNTSKQSSTGTQE). Residues 182–193 (NPSSVLPSNSSS) are compositionally biased toward low complexity. A compositionally biased stretch (polar residues) spans 204-226 (KETYQPNTFRRSPLKNDTGSVEL). Residues 290-299 (TRPSSTRFPS) are compositionally biased toward low complexity.

This is an uncharacterized protein from Schizosaccharomyces pombe (strain 972 / ATCC 24843) (Fission yeast).